The following is a 504-amino-acid chain: MNEKQKKTQKLRARLPRGFVDRSAADIRAVDEMIAKIREVYERYGFDPVETPLFEYTDALGKFLPDSDRPNEGVFSLTDDDDQWLSLRYDLTAPLARHVAENFNEIQLPYRTYRAGYVFRNEKPGPGRFRQFMQFDADTVGAAGVQADAEMCMMMADTMEALGIARGDYVIRVNNRKVLDGVLEAIGLGGVEQTNTRLTVLRAIDKLDKFGPEGVRLLLGEGRKDESGDFTKGAGLNEEQIGKILFFVGITDYARSADELAALVAGTARGAEGVNELNTIRGLVLSAGYEADRIKIDPSVVRGLEYYTGPVFEAELQFAVTNEKGEKVVFGSVGGGGRYDGLVSRFMGQPVPATGFSIGVSRLMTALKNLGKLGAEQVTAPVVVCVMDRDIESMGRYQRFVQDLRHAGIRAEMYQGNKKNFGDQLKYADRRGSPIAVIQGGDERASGVVQIKDLIEGKRLSGEIEDNVAWREARVAQVSVPEGELVAKVRQILAEQAEDRKRAG.

Belongs to the class-II aminoacyl-tRNA synthetase family. In terms of assembly, homodimer.

Its subcellular location is the cytoplasm. The enzyme catalyses tRNA(His) + L-histidine + ATP = L-histidyl-tRNA(His) + AMP + diphosphate + H(+). This chain is Histidine--tRNA ligase (hisS), found in Rhizobium meliloti (strain 1021) (Ensifer meliloti).